Here is a 213-residue protein sequence, read N- to C-terminus: Probable nicotinate-nucleotide adenylyltransferase (213 aa).

The protein belongs to the NadD family.

The catalysed reaction is nicotinate beta-D-ribonucleotide + ATP + H(+) = deamido-NAD(+) + diphosphate. Its pathway is cofactor biosynthesis; NAD(+) biosynthesis; deamido-NAD(+) from nicotinate D-ribonucleotide: step 1/1. In terms of biological role, catalyzes the reversible adenylation of nicotinate mononucleotide (NaMN) to nicotinic acid adenine dinucleotide (NaAD). This is Probable nicotinate-nucleotide adenylyltransferase from Citrobacter koseri (strain ATCC BAA-895 / CDC 4225-83 / SGSC4696).